We begin with the raw amino-acid sequence, 702 residues long: NAD(P)H-quinone oxidoreductase subunit 5, chloroplastic (702 aa).

15 helical membrane passes run 1-21 (WVIP…LFFI), 31-51 (IWAF…VHLS), 81-101 (IDPL…LVLI), 117-137 (FVYI…SNLI), 139-159 (IYFF…FWFT), 177-197 (GDFG…SLEF), 211-231 (NGIN…GAVA), 250-270 (TPIS…FLLA), 272-292 (LFPL…VGTI), 319-339 (LGYM…FHLI), 346-366 (ALLF…VGYS), 388-408 (TTFL…CFWS), 417-437 (WLYS…TAFY), 534-554 (LFPL…GISF), and 602-622 (SLAI…YSFF).

This sequence belongs to the complex I subunit 5 family. As to quaternary structure, NDH is composed of at least 16 different subunits, 5 of which are encoded in the nucleus.

The protein localises to the plastid. It localises to the chloroplast thylakoid membrane. It catalyses the reaction a plastoquinone + NADH + (n+1) H(+)(in) = a plastoquinol + NAD(+) + n H(+)(out). The catalysed reaction is a plastoquinone + NADPH + (n+1) H(+)(in) = a plastoquinol + NADP(+) + n H(+)(out). NDH shuttles electrons from NAD(P)H:plastoquinone, via FMN and iron-sulfur (Fe-S) centers, to quinones in the photosynthetic chain and possibly in a chloroplast respiratory chain. The immediate electron acceptor for the enzyme in this species is believed to be plastoquinone. Couples the redox reaction to proton translocation, and thus conserves the redox energy in a proton gradient. The polypeptide is NAD(P)H-quinone oxidoreductase subunit 5, chloroplastic (ndhF) (Poa pratensis (Kentucky bluegrass)).